Here is a 564-residue protein sequence, read N- to C-terminus: Rhotekin (564 aa).

The residue at position 14 (arginine 14) is an Omega-N-methylarginine. Positions 17-98 (ALEMEFKRGR…LQRRKEAQVL (82 aa)) constitute an REM-1 domain. A phosphoserine mark is found at serine 30 and serine 106. The residue at position 230 (arginine 230) is an Asymmetric dimethylarginine. Phosphoserine is present on serine 232. The region spanning 309 to 416 (QPTASGALRV…WMEALWQLFF (108 aa)) is the PH domain. The disordered stretch occupies residues 518 to 564 (TFSLDAAPADHSLGPSRSVAPLPPQRSPKSRGFYSKSQLGPWLQSPV). Serine 520, serine 529, and serine 544 each carry phosphoserine.

In terms of assembly, interacts via its C-terminal region with the TAX1BP3 PDZ domain. This interaction facilitates Rho-mediated activation of the c-Fos serum response element (SRE). Interacts with SEPT9. Specifically binds to GTP-bound RHOA, RHOB and RHOC and inhibits their GTPase activity. Abundantly expressed in brain and kidney. Weakly expressed in lung, testis, skeletal muscle, heart and thymus.

Functionally, mediates Rho signaling to activate NF-kappa-B and may confer increased resistance to apoptosis to cells in gastric tumorigenesis. May play a novel role in the organization of septin structures. The polypeptide is Rhotekin (Mus musculus (Mouse)).